A 461-amino-acid polypeptide reads, in one-letter code: Probable tubulin polyglutamylase TTLL9 (461 aa).

The span at 1-10 (MSRQKSQTSK) shows a compositional bias: polar residues. Positions 1-20 (MSRQKSQTSKGHGASKGKER) are disordered. A TTL domain is found at 22–402 (QRTLIRFKTT…EARLTGKEKR (381 aa)). Residues K149 and 155–156 (QG) contribute to the ATP site. Q155 is a binding site for a protein. The span at 186-197 (QATRANVNPSGS) shows a compositional bias: polar residues. A disordered region spans residues 186–208 (QATRANVNPSGSHDTRSSDDQKD). The span at 198–208 (HDTRSSDDQKD) shows a compositional bias: basic and acidic residues. Residues 218-221 (QRYV) and 231-233 (KFD) contribute to the ATP site. R257 serves as a coordination point for L-glutamate. 276–277 (TN) lines the ATP pocket. Residue K294 coordinates L-glutamate. Residues D348, E361, and N363 each contribute to the Mg(2+) site. K379 contacts L-glutamate.

This sequence belongs to the tubulin--tyrosine ligase family. The cofactor is Mg(2+).

The protein resides in the cytoplasm. It localises to the cytoskeleton. Its subcellular location is the cilium basal body. The protein localises to the flagellum axoneme. The enzyme catalyses (L-glutamyl)(n)-gamma-L-glutamyl-L-glutamyl-[protein] + L-glutamate + ATP = (L-glutamyl)(n+1)-gamma-L-glutamyl-L-glutamyl-[protein] + ADP + phosphate + H(+). Probable tubulin polyglutamylase that generates side chains of glutamate on the gamma-carboxyl group of specific glutamate residues within the C-terminal tail of target proteins. Similar to TTLL1, may acquire enzymatic activity only in complex with other proteins as it is most likely lacking domains important for autonomous activity. Mediates tubulin polyglutamylation which induces establishment of microtubule heterogeneity in sperm flagella, thereby playing a role in normal motile flagella axoneme structure and sperm flagella beating pattern. This Rattus norvegicus (Rat) protein is Probable tubulin polyglutamylase TTLL9 (Ttll9).